Consider the following 294-residue polypeptide: Non-selective voltage-gated ion channel VDAC2 (294 aa).

A2 is subject to N-acetylalanine. Residues K23 and K31 each contribute to the ATP site. K31 is modified (N6-acetyllysine; alternate). K31 is modified (N6-succinyllysine; alternate). K31 participates in a covalent cross-link: Glycyl lysine isopeptide (Lys-Gly) (interchain with G-Cter in ubiquitin); alternate. 2 consecutive transmembrane segments (beta stranded) span residues 37 to 46 and 50 to 58; these read LVKLDVKTKS and VEFSTSGSS. Glycyl lysine isopeptide (Lys-Gly) (interchain with G-Cter in ubiquitin) cross-links involve residues K64 and K72. The chain crosses the membrane as a beta stranded span at residues 65 to 75; sequence VTGTLETKYKW. Residue Y78 is modified to Phosphotyrosine. The next 3 beta stranded transmembrane spans lie at 80 to 87, 91 to 100, and 106 to 115; these read LTFTEKWN, TLGTEIAIED, and LKLTFDTTFS. Position 118 is a phosphothreonine (T118). N6-acetyllysine; alternate is present on K120. K120 is covalently cross-linked (Glycyl lysine isopeptide (Lys-Gly) (interchain with G-Cter in ubiquitin); alternate). Glycyl lysine isopeptide (Lys-Gly) (interchain with G-Cter in ubiquitin) cross-links involve residues K121 and K124. 4 beta stranded membrane-spanning segments follow: residues 122 to 131, 134 to 141, 148 to 156, and 161 to 169; these read SGKIKSSYKR, INLGCDVD, AIHGSAVFG, and LAGYQMTFD. A Glycyl lysine isopeptide (Lys-Gly) (interchain with G-Cter in ubiquitin) cross-link involves residue K172. A run of 6 beta stranded transmembrane segments spans residues 174-186, 189-196, 200-209, 213-222, 229-238, and 242-249; these read KLTRNNFAVGYRT, FQLHTNVN, EFGGSIYQKV, LDTSVNLAWT, RFGIAAKYQL, and ASISAKVN. S251 is modified (phosphoserine). Residues 253–255 and 271–275 contribute to the NAD(+) site; these read LIG and SALVD. 2 beta stranded membrane passes run 253-262 and 265-274; these read LIGVGYTQTL and GVKLTLSALV. K277 carries the N6-acetyllysine; alternate modification. A Glycyl lysine isopeptide (Lys-Gly) (interchain with G-Cter in ubiquitin); alternate cross-link involves residue K277. Residues 284–293 traverse the membrane as a beta stranded segment; the sequence is HKVGLALELE. K285 is covalently cross-linked (Glycyl lysine isopeptide (Lys-Gly) (interchain with G-Cter in ubiquitin)).

This sequence belongs to the eukaryotic mitochondrial porin family. Monomer, homodimer and higher order oligomers; formation of higher order structures is necessary for scramblase activity. Interacts with ARMC12 in a TBC1D21-dependent manner. Interacts with KLC3. Interacts with SPATA33. Interacts with PPP3CC in a SPATA33-dependent manner. In terms of processing, ubiquitinated by PRKN during mitophagy, leading to its degradation and enhancement of mitophagy. Deubiquitinated by USP30. In terms of tissue distribution, expressed in erythrocytes (at protein level). Expressed in all tissues examined.

It localises to the mitochondrion outer membrane. Its subcellular location is the membrane. The catalysed reaction is chloride(in) = chloride(out). The enzyme catalyses K(+)(in) = K(+)(out). It catalyses the reaction a 1,2-diacyl-sn-glycero-3-phospho-L-serine(in) = a 1,2-diacyl-sn-glycero-3-phospho-L-serine(out). It carries out the reaction a 1,2-diacyl-sn-glycero-3-phosphocholine(in) = a 1,2-diacyl-sn-glycero-3-phosphocholine(out). The catalysed reaction is a 1,2-diacyl-sn-glycero-3-phospho-(1D-myo-inositol)(in) = a 1,2-diacyl-sn-glycero-3-phospho-(1D-myo-inositol)(out). Functionally, non-selective voltage-gated ion channel that mediates the transport of anions and cations through the mitochondrion outer membrane and plasma membrane. The channel adopts an open conformation at zero mV and a closed conformation at both positive and negative potentials. There are two populations of channels; the main that functions in a lower open-state conductance with lower ion selectivity, that switch, in a voltage-dependent manner, from the open to a low-conducting 'closed' state and the other that has a normal ion selectivity in the typical high conductance, 'open' state. Binds various lipids, including the sphingolipid ceramide, the phospholipid phosphatidylcholine, and the sterols cholesterol and oxysterol. Binding of ceramide promotes the mitochondrial outer membrane permeabilization (MOMP) apoptotic pathway. Its function is as follows. Catalyzes the scrambling of phospholipids across the outer mitochondrial membrane; the mechanism is unrelated to channel activity and is capable of translocating both anionic and zwitterionic phospholipids. The protein is Non-selective voltage-gated ion channel VDAC2 of Homo sapiens (Human).